Here is a 1267-residue protein sequence, read N- to C-terminus: Probable ATP-dependent RNA helicase DHR1 (1267 aa).

Disordered regions lie at residues 1-67, 168-233, and 255-313; these read MGTY…EPLT, YEPK…SNIK, and EELK…DQND. Basic and acidic residues-rich tracts occupy residues 7–25 and 32–43; these read RFNE…ELKR and TRQDENDERVEN. A compositionally biased stretch (acidic residues) spans 175 to 192; sequence EYGEGGSSEDDDGEDDFE. Ser-181 bears the Phosphoserine mark. Basic and acidic residues predominate over residues 202–217; the sequence is TDNEEKKSSGFIDHRP. Positions 264–284 are enriched in acidic residues; it reads DEMDFDTTSEDDDEEEDQEEE. Positions 401-580 constitute a Helicase ATP-binding domain; the sequence is MEAIHHNDVV…KTLFPIAPPV (180 aa). An ATP-binding site is contributed by 414–421; it reads GETGSGKT. The short motif at 516–519 is the DEAH box element; sequence DEAH. Residues 675-858 enclose the Helicase C-terminal domain; sequence DIDFSVQVID…SIVLQMKSMA (184 aa). 2 disordered regions span residues 693–720 and 955–976; these read RYEE…EVLT and PNPD…PGMD. Residues 695 to 719 show a composition bias toward acidic residues; sequence EEDEGNSGNGEDEEDEEEEGFEEVL.

This sequence belongs to the DEAD box helicase family. DEAH subfamily. As to quaternary structure, interacts with snoRNA U3. Component of the ribosomal small subunit (SSU) processome composed of at least 40 protein subunits and snoRNA U3.

It localises to the nucleus. The protein localises to the nucleolus. The catalysed reaction is ATP + H2O = ADP + phosphate + H(+). Its function is as follows. Probable ATP-binding RNA helicase. Required for 18S rRNA synthesis. May play a role in restructuring of the pre-rRNA. The sequence is that of Probable ATP-dependent RNA helicase DHR1 (ECM16) from Saccharomyces cerevisiae (strain ATCC 204508 / S288c) (Baker's yeast).